The chain runs to 141 residues: DUF35 domain-containing scaffold protein (141 aa).

Zn(2+) contacts are provided by Cys-30, Cys-33, Cys-44, and Cys-47.

This sequence belongs to the scaffold protein DUF35 family. As to quaternary structure, interacts with acetoacetyl-CoA thiolase and HMG-CoA synthase (HMGCS) that catalyzes the first and second step in the mevalonate pathway, respectively.

Its function is as follows. Functions as a scaffold to connect the acetoacetyl-CoA thiolase and HMG-CoA synthase (HMGCS) dimers in the channeling thiolase/HMGCS complex, which allows for efficient coupling of the endergonic thiolase reaction with the exergonic HMGCS reaction. This chain is DUF35 domain-containing scaffold protein, found in Methanocaldococcus jannaschii (strain ATCC 43067 / DSM 2661 / JAL-1 / JCM 10045 / NBRC 100440) (Methanococcus jannaschii).